The sequence spans 114 residues: Cytochrome c oxidase assembly protein cox16, mitochondrial (114 aa).

Residues 29-49 form a helical membrane-spanning segment; sequence PFLLFGLPFMSVIVAGSFILT.

This sequence belongs to the COX16 family.

The protein localises to the mitochondrion inner membrane. Required for the assembly of the mitochondrial respiratory chain complex IV (CIV), also known as cytochrome c oxidase. May participate in merging the COX1 and COX2 assembly lines. The chain is Cytochrome c oxidase assembly protein cox16, mitochondrial (cox-9) from Neurospora crassa (strain ATCC 24698 / 74-OR23-1A / CBS 708.71 / DSM 1257 / FGSC 987).